Here is a 600-residue protein sequence, read N- to C-terminus: MREISVPAPFTVGEHDNVAAMVFEHERDDPDYVIYQRLIDGVWTDVTCAEAANQIRAAALGLISLGVQAGDRVVIFSATRYEWAILDFAILAVGAVTVPTYETSSAEQVRWVLQDSEAVVLFAETDSHATMVAELSGSVPALREVLQIAGSGPNALDRLTEAGASVDPAELTARLAALRSTDPATLIYTSGTTGRPKGCQLTQSNLVHEIKGARAYHPTLLRKGERLLVFLPLAHVLARAISMAAFHSKVTVGFTSDIKNLLPMLAVFKPTVVVSVPRVFEKVYNTAEQNAANAGKGRIFAIAAQTAVDWSEACDRGGPGLLLRAKHAVFDRLVYRKLRAALGGNCRAAVSGGAPLGARLGHFYRGAGLTIYEGYGLSGTSGGVAISQFNDLKIGTVGKPVPGNSLRIADDGELLVRGGVVFSGYWRNEQATTEAFTDGWFKTGDLGAVDEDGFLTITGRKKEIIVTAGGKNVAPAVLEDQLRAHPLISQAVVVGDAKPFIGALITIDPEAFEGWKQRNSKTAGASVGDLATDPDLIAEIDAAVKQANLAVSHAESIRKFRILPVDFTEDTGELTPTMKVKRKVVAEKFASDIEAIYNKE.

It belongs to the ATP-dependent AMP-binding enzyme family.

The catalysed reaction is a long-chain fatty acid + ATP + CoA = a long-chain fatty acyl-CoA + AMP + diphosphate. It catalyses the reaction dodecanoate + ATP + CoA = dodecanoyl-CoA + AMP + diphosphate. The enzyme catalyses hexadecanoate + ATP + CoA = hexadecanoyl-CoA + AMP + diphosphate. The protein operates within lipid metabolism; fatty acid biosynthesis. In terms of biological role, catalyzes the activation of long-chain fatty acids as acyl-coenzyme A (acyl-CoA), which are then transferred to the multifunctional polyketide synthase (PKS) type III for further chain extension. This Mycobacterium tuberculosis (strain ATCC 25618 / H37Rv) protein is Long-chain-fatty-acid--CoA ligase FadD15 (fadD15).